A 495-amino-acid polypeptide reads, in one-letter code: Phosphomethylpyrimidine synthase (495 aa).

Residues Asn-125, Met-154, Tyr-183, His-219, Ser-239–Gly-241, Asp-280–Arg-283, and Glu-319 each bind substrate. Position 323 (His-323) interacts with Zn(2+). Tyr-346 provides a ligand contact to substrate. Position 387 (His-387) interacts with Zn(2+). 3 residues coordinate [4Fe-4S] cluster: Cys-467, Cys-470, and Cys-475.

The protein belongs to the ThiC family. [4Fe-4S] cluster serves as cofactor.

The catalysed reaction is 5-amino-1-(5-phospho-beta-D-ribosyl)imidazole + S-adenosyl-L-methionine = 4-amino-2-methyl-5-(phosphooxymethyl)pyrimidine + CO + 5'-deoxyadenosine + formate + L-methionine + 3 H(+). It functions in the pathway cofactor biosynthesis; thiamine diphosphate biosynthesis. In terms of biological role, catalyzes the synthesis of the hydroxymethylpyrimidine phosphate (HMP-P) moiety of thiamine from aminoimidazole ribotide (AIR) in a radical S-adenosyl-L-methionine (SAM)-dependent reaction. The chain is Phosphomethylpyrimidine synthase from Leptospira interrogans serogroup Icterohaemorrhagiae serovar Lai (strain 56601).